Reading from the N-terminus, the 215-residue chain is Adenylate kinase (215 aa).

Residue Gly-10–Thr-15 participates in ATP binding. An NMP region spans residues Ser-30 to Val-59. Residues Thr-31, Arg-36, Leu-57 to Val-59, Gly-85 to Arg-88, and Gln-92 each bind AMP. The tract at residues Gly-126 to Asp-163 is LID. ATP is bound at residue Arg-127. Residues Cys-130 and Cys-133 each contribute to the Zn(2+) site. Ser-136 to Phe-137 contacts ATP. The Zn(2+) site is built by Cys-150 and Cys-153. The AMP site is built by Arg-160 and Arg-171. Lys-199 lines the ATP pocket.

Belongs to the adenylate kinase family. Monomer.

It localises to the cytoplasm. It carries out the reaction AMP + ATP = 2 ADP. It functions in the pathway purine metabolism; AMP biosynthesis via salvage pathway; AMP from ADP: step 1/1. Its function is as follows. Catalyzes the reversible transfer of the terminal phosphate group between ATP and AMP. Plays an important role in cellular energy homeostasis and in adenine nucleotide metabolism. This is Adenylate kinase from Clostridium botulinum (strain Alaska E43 / Type E3).